A 107-amino-acid polypeptide reads, in one-letter code: UPF0145 protein PC1_1703 (107 aa).

The protein belongs to the UPF0145 family.

The chain is UPF0145 protein PC1_1703 from Pectobacterium carotovorum subsp. carotovorum (strain PC1).